The sequence spans 160 residues: Snaclec subunit A (160 aa).

Residues 1 to 23 (MGRFILVNLGLLVVAFSLRGSEA) form the signal peptide. 3 disulfides stabilise this stretch: Cys-25–Cys-36, Cys-53–Cys-150, and Cys-125–Cys-142. The 120-residue stretch at 32–151 (YDKYCYKVFD…CDFTLPFICK (120 aa)) folds into the C-type lectin domain.

It belongs to the snaclec family. Heterodimer of subunits A and B; disulfide-linked. In terms of tissue distribution, expressed by the venom gland.

Its subcellular location is the secreted. In terms of biological role, interferes with one step of hemostasis (modulation of platelet aggregation, or coagulation cascade, for example). The polypeptide is Snaclec subunit A (Philodryas olfersii (Green snake)).